Consider the following 119-residue polypeptide: uncharacterized protein (119 aa).

The tract at residues 1-22 (MQGQAGKRKTDGKVPSNTEQNC) is disordered.

This is an uncharacterized protein from Saccharomyces cerevisiae (strain ATCC 204508 / S288c) (Baker's yeast).